The chain runs to 450 residues: Zinc metalloproteinase nas-13 (450 aa).

The N-terminal stretch at 1 to 31 (MPSPTSSSASVFSSHLFFVFCIFSQIAQSYA) is a signal peptide. N-linked (GlcNAc...) asparagine glycosylation is present at Asn-68. The region spanning 110-303 (NAVRQTYLKW…YKINMLYNCP (194 aa)) is the Peptidase M12A domain. Cystine bridges form between Cys-152-Cys-302 and Cys-174-Cys-193. His-201 contacts Zn(2+). Glu-202 is a catalytic residue. The Zn(2+) site is built by His-205 and His-211. A glycan (N-linked (GlcNAc...) asparagine) is linked at Asn-225. The Cell attachment site signature appears at 349 to 351 (RGD). 6 disulfide bridges follow: Cys-368–Cys-404, Cys-375–Cys-397, Cys-384–Cys-401, Cys-414–Cys-450, Cys-421–Cys-443, and Cys-430–Cys-447. 2 ShKT domains span residues 368–404 (CEDRRKDCEFLARAGHCESRFSIRFMTENCANSCGKC) and 414–450 (CEDARTWCERWANSGMCNQTVFKDYMRQKCAKSCNFC). An N-linked (GlcNAc...) asparagine glycan is attached at Asn-431.

The cofactor is Zn(2+).

It is found in the secreted. Metalloprotease. The protein is Zinc metalloproteinase nas-13 (nas-13) of Caenorhabditis elegans.